Reading from the N-terminus, the 159-residue chain is Ribosomal RNA large subunit methyltransferase H (159 aa).

S-adenosyl-L-methionine contacts are provided by residues Gly108 and 127 to 132; that span reads FGKLTM.

This sequence belongs to the RNA methyltransferase RlmH family. As to quaternary structure, homodimer.

Its subcellular location is the cytoplasm. It catalyses the reaction pseudouridine(1915) in 23S rRNA + S-adenosyl-L-methionine = N(3)-methylpseudouridine(1915) in 23S rRNA + S-adenosyl-L-homocysteine + H(+). Functionally, specifically methylates the pseudouridine at position 1915 (m3Psi1915) in 23S rRNA. This Lactobacillus helveticus (strain DPC 4571) protein is Ribosomal RNA large subunit methyltransferase H.